The following is a 77-amino-acid chain: Acyl carrier protein (77 aa).

The Carrier domain occupies 3-77; the sequence is QEIFEKVKKI…GKAVEHIESK (75 aa). The residue at position 38 (S38) is an O-(pantetheine 4'-phosphoryl)serine.

Belongs to the acyl carrier protein (ACP) family. In terms of processing, 4'-phosphopantetheine is transferred from CoA to a specific serine of apo-ACP by AcpS. This modification is essential for activity because fatty acids are bound in thioester linkage to the sulfhydryl of the prosthetic group.

The protein localises to the cytoplasm. The protein operates within lipid metabolism; fatty acid biosynthesis. Its function is as follows. Carrier of the growing fatty acid chain in fatty acid biosynthesis. This is Acyl carrier protein from Synechocystis sp. (strain ATCC 27184 / PCC 6803 / Kazusa).